Consider the following 467-residue polypeptide: UDP-N-acetylmuramoylalanine--D-glutamate ligase (467 aa).

121–127 (GTNGKST) contributes to the ATP binding site.

The protein belongs to the MurCDEF family.

Its subcellular location is the cytoplasm. The catalysed reaction is UDP-N-acetyl-alpha-D-muramoyl-L-alanine + D-glutamate + ATP = UDP-N-acetyl-alpha-D-muramoyl-L-alanyl-D-glutamate + ADP + phosphate + H(+). The protein operates within cell wall biogenesis; peptidoglycan biosynthesis. Cell wall formation. Catalyzes the addition of glutamate to the nucleotide precursor UDP-N-acetylmuramoyl-L-alanine (UMA). This chain is UDP-N-acetylmuramoylalanine--D-glutamate ligase, found in Chelativorans sp. (strain BNC1).